Consider the following 528-residue polypeptide: DEAD-box ATP-dependent RNA helicase CshA (528 aa).

Positions 2 to 30 (TTFRELGLSDSLLQSVESMGFEEATPIQA) match the Q motif motif. A Helicase ATP-binding domain is found at 33-203 (IPHALQGKDI…ERFMTEPQHI (171 aa)). 46 to 53 (AQTGTGKT) lines the ATP pocket. A DEAD box motif is present at residues 151–154 (DEAD). The region spanning 214-374 (NIQQFYLEVQ…RMDAPTLDEA (161 aa)) is the Helicase C-terminal domain. The disordered stretch occupies residues 428 to 528 (TTPIALTSEP…RKHHSRKPQA (101 aa)). Residues 458–506 (DGNRNRSRDGRGGDGRNRDRNRDGRNRDGNRDRNREGSRDGNRGRRGEG) are compositionally biased toward basic and acidic residues. Over residues 518-528 (ERKHHSRKPQA) the composition is skewed to basic residues.

The protein belongs to the DEAD box helicase family. CshA subfamily. In terms of assembly, oligomerizes, may be a member of the RNA degradosome.

It localises to the cytoplasm. It catalyses the reaction ATP + H2O = ADP + phosphate + H(+). DEAD-box RNA helicase possibly involved in RNA degradation. Unwinds dsRNA in both 5'- and 3'-directions, has RNA-dependent ATPase activity. In Bacillus thuringiensis (strain Al Hakam), this protein is DEAD-box ATP-dependent RNA helicase CshA.